We begin with the raw amino-acid sequence, 347 residues long: Bombesin receptor-activated protein C6orf89 (347 aa).

Residues 1–58 (MDLAANEISIYDKLSETVDLVRQTGHQCGMSEKAIEKFIRQLLEKNEPQRPPPQYPLL) lie on the Cytoplasmic side of the membrane. The chain crosses the membrane as a helical span at residues 59–79 (IVVYKVLATLGLILLTAYFVI). The Extracellular segment spans residues 80–347 (QPFSPLAPEP…ICDGTAFSEL (268 aa)).

Homodimer. Interacts with BRS3. Interacts (via N-terminus) with SIN3B. Glycosylated.

The protein localises to the golgi apparatus membrane. Its subcellular location is the midbody. The protein resides in the cytoplasm. It is found in the nucleus. It localises to the nucleolus. Exhibits histone deacetylase (HDAC) enhancer properties. May play a role in cell cycle progression and wound repair of bronchial epithelial cells. In Homo sapiens (Human), this protein is Bombesin receptor-activated protein C6orf89 (C6orf89).